Reading from the N-terminus, the 637-residue chain is DNA primase (637 aa).

Residues 39–63 (CPFHGEKTPSFNVNAEKGFYHCFGC) form a CHC2-type zinc finger. Residues 257–338 (HEVYLMEGFM…QIVKVPEGLD (82 aa)) enclose the Toprim domain. Residues Glu-263, Asp-307, and Asp-309 each contribute to the Mg(2+) site.

Belongs to the DnaG primase family. As to quaternary structure, monomer. Interacts with DnaB. Requires Zn(2+) as cofactor. Mg(2+) serves as cofactor.

The catalysed reaction is ssDNA + n NTP = ssDNA/pppN(pN)n-1 hybrid + (n-1) diphosphate.. RNA polymerase that catalyzes the synthesis of short RNA molecules used as primers for DNA polymerase during DNA replication. This Lactococcus lactis subsp. lactis (strain IL1403) (Streptococcus lactis) protein is DNA primase.